The primary structure comprises 164 residues: Phosphopantetheine adenylyltransferase (164 aa).

Substrate is bound at residue Ser-9. Residues 9-10 (SF) and His-17 contribute to the ATP site. Residues Lys-41, Leu-73, and Arg-87 each contribute to the substrate site. ATP contacts are provided by residues Glu-98 and 122–128 (YSFLSSS).

This sequence belongs to the bacterial CoaD family. In terms of assembly, homohexamer. Mg(2+) is required as a cofactor.

The protein resides in the cytoplasm. It carries out the reaction (R)-4'-phosphopantetheine + ATP + H(+) = 3'-dephospho-CoA + diphosphate. The protein operates within cofactor biosynthesis; coenzyme A biosynthesis; CoA from (R)-pantothenate: step 4/5. Functionally, reversibly transfers an adenylyl group from ATP to 4'-phosphopantetheine, yielding dephospho-CoA (dPCoA) and pyrophosphate. In Thermobifida fusca (strain YX), this protein is Phosphopantetheine adenylyltransferase.